We begin with the raw amino-acid sequence, 890 residues long: Kinesin-like protein KIF20A (890 aa).

At S2 the chain carries N-acetylserine. Phosphoserine is present on residues S7, S14, and S21. The 444-residue stretch at 64 to 507 (KVKVYLRVRP…AKFSAIASQL (444 aa)) folds into the Kinesin motor domain. 160 to 167 (GVTNSGKT) is a binding site for ATP. S528 is subject to Phosphoserine; by PLK1. Phosphoserine occurs at positions 532, 662, 668, 685, and 825. Positions 611–762 (LDTQKELLEE…ESLQSAERAC (152 aa)) form a coiled coil. The globular stretch occupies residues 763–890 (CHSTGAGKLR…LKSGPFGKKY (128 aa)). The interval 832-865 (TNQENQQPNQQPPGKKPFLRNLLPRTPTCQSSTD) is disordered. T857 is modified (phosphothreonine). Phosphoserine occurs at positions 867, 878, and 883.

It belongs to the TRAFAC class myosin-kinesin ATPase superfamily. Kinesin family. Post-translationally, phosphorylated by PLK1 at Ser-528 during mitosis, creating a docking site for PLK1 and recruiting PLK1 at central spindle.

It is found in the golgi apparatus. It localises to the cytoplasm. The protein resides in the cytoskeleton. The protein localises to the spindle. In terms of biological role, mitotic kinesin required for chromosome passenger complex (CPC)-mediated cytokinesis. Following phosphorylation by PLK1, involved in recruitment of PLK1 to the central spindle. Interacts with guanosine triphosphate (GTP)-bound forms of RAB6A and RAB6B. May act as a motor required for the retrograde RAB6 regulated transport of Golgi membranes and associated vesicles along microtubules. Has a microtubule plus end-directed motility. The polypeptide is Kinesin-like protein KIF20A (KIF20A) (Homo sapiens (Human)).